Reading from the N-terminus, the 295-residue chain is Nuclear transcription factor Y subunit A-2 (295 aa).

Residues tyrosine 139–lysine 165 carry the Subunit association domain (SAD) motif. The NFYA/HAP2-type DNA-binding region spans lysine 173–threonine 198. The segment covering histidine 178–arginine 189 has biased composition (basic residues). Positions histidine 178–asparagine 244 are disordered. A compositionally biased stretch (polar residues) spans asparagine 197–asparagine 209. A compositionally biased stretch (low complexity) spans serine 216 to serine 233.

Belongs to the NFYA/HAP2 subunit family. As to quaternary structure, heterotrimeric transcription factor composed of three components, NF-YA, NF-YB and NF-YC. NF-YB and NF-YC must interact and dimerize for NF-YA association and DNA binding. Component of a heat stress-inducible transcriptional complex with NF-YA and NF-YB subunits made, at least, of NFYA2, NFYB3 and DPB3-1 in cooperation with DREB2A. In terms of tissue distribution, ubiquitous. Expressed in seedlings, roots, petioles, hypocotyls, reproductive organ tissues and leaves.

Its subcellular location is the nucleus. Functionally, stimulates the transcription of various genes by recognizing and binding to a CCAAT motif in promoters. Promotes the expression of heat stress-inducible genes by contributing to the formation of a heat stress-specific transcriptional complex with NF-Y subunits (e.g. DPB3-1, NF-YA2 and NF-YB3) and DREB2A at the promoter of target genes, thus promoting heat tolerance. This Arabidopsis thaliana (Mouse-ear cress) protein is Nuclear transcription factor Y subunit A-2.